A 746-amino-acid polypeptide reads, in one-letter code: Bud site selection protein 7 (746 aa).

Residues 733-746 form a CHS5-binding region; sequence LNFFTTCTIGCYDA.

Belongs to the CHAPS family. As to quaternary structure, component of the CHS5/6 complex composed of the 4 CHAPS proteins BCH1, BCH2v, BUD7, and CHS6 as well as at least CHS5 and GTP-bound ARF1. The complex interacts with the cargo protein CHS3.

The protein localises to the golgi apparatus. It is found in the trans-Golgi network membrane. In terms of biological role, member of the CHS5-ARF1P-binding proteins (CHAPS) which mediates export of specific cargo proteins, including chitin synthase CHS3. May be involved in positioning the proximal bud pole signal. This Saccharomyces cerevisiae (strain ATCC 204508 / S288c) (Baker's yeast) protein is Bud site selection protein 7 (BUD7).